Here is a 125-residue protein sequence, read N- to C-terminus: Protein AC4 (125 aa).

Belongs to the geminiviridae protein AC4/C4 family.

Its function is as follows. Pathogenicity determinant. May act as a suppressor of RNA-mediated gene silencing, also known as post-transcriptional gene silencing (PTGS), a mechanism of plant viral defense that limits the accumulation of viral RNAs. The polypeptide is Protein AC4 (Cucurbita moschata (Winter crookneck squash)).